The sequence spans 99 residues: Large ribosomal subunit protein P1 (99 aa).

As to quaternary structure, part of the 50S ribosomal subunit. Homodimer, it forms part of the ribosomal stalk which helps the ribosome interact with GTP-bound translation factors. Forms both a pentameric uL10/P0(P1)2(P1)2 and heptameric uL10/P0(P1)2(P1)2(P1)2 complex, where uL10/P0 forms an elongated spine to which the P1 dimers bind in a sequential fashion. The proportion of heptameric complexes increases during cell growth.

In terms of biological role, forms part of the ribosomal stalk, playing a central role in the interaction of the ribosome with GTP-bound translation factors. This chain is Large ribosomal subunit protein P1, found in Methanococcus vannielii.